Reading from the N-terminus, the 195-residue chain is FMN-dependent NADH:quinone oxidoreductase (195 aa).

FMN is bound by residues Ser-10, 16–18 (SVS), and 88–91 (MYNF).

Belongs to the azoreductase type 1 family. Homodimer. FMN serves as cofactor.

It carries out the reaction 2 a quinone + NADH + H(+) = 2 a 1,4-benzosemiquinone + NAD(+). It catalyses the reaction N,N-dimethyl-1,4-phenylenediamine + anthranilate + 2 NAD(+) = 2-(4-dimethylaminophenyl)diazenylbenzoate + 2 NADH + 2 H(+). Its function is as follows. Quinone reductase that provides resistance to thiol-specific stress caused by electrophilic quinones. Functionally, also exhibits azoreductase activity. Catalyzes the reductive cleavage of the azo bond in aromatic azo compounds to the corresponding amines. The protein is FMN-dependent NADH:quinone oxidoreductase of Francisella philomiragia subsp. philomiragia (strain ATCC 25017 / CCUG 19701 / FSC 153 / O#319-036).